Reading from the N-terminus, the 49-residue chain is MADIITLACTECKQRNYTTTKNKKTKPERLEFNKYCRFCRKHTPHRETK.

The protein belongs to the bacterial ribosomal protein bL33 family.

This Syntrophotalea carbinolica (strain DSM 2380 / NBRC 103641 / GraBd1) (Pelobacter carbinolicus) protein is Large ribosomal subunit protein bL33.